A 309-amino-acid polypeptide reads, in one-letter code: Glycine--tRNA ligase alpha subunit (309 aa).

Belongs to the class-II aminoacyl-tRNA synthetase family. As to quaternary structure, tetramer of two alpha and two beta subunits.

Its subcellular location is the cytoplasm. The catalysed reaction is tRNA(Gly) + glycine + ATP = glycyl-tRNA(Gly) + AMP + diphosphate. The polypeptide is Glycine--tRNA ligase alpha subunit (Anaeromyxobacter sp. (strain K)).